A 143-amino-acid chain; its full sequence is Transcriptional regulator MraZ (143 aa).

SpoVT-AbrB domains lie at 5–47 (TYTP…PRDE) and 76–119 (TDEQ…DAQA).

The protein belongs to the MraZ family. Forms oligomers.

Its subcellular location is the cytoplasm. The protein localises to the nucleoid. The sequence is that of Transcriptional regulator MraZ from Mycolicibacterium smegmatis (strain ATCC 700084 / mc(2)155) (Mycobacterium smegmatis).